A 149-amino-acid chain; its full sequence is MFCPFCSIQETKVIDSRLVADGHQVRRRRECTMCKERFTTFEMAELVMPRVVKRDGSREPFNEDKLRAGLQRALEKRPVSTEQVEQCISRLKSAMRATGEREITSEYLGNLIMDALKELDKVAYVRFASVYRSFEDIREFGEEIARLGD.

The segment at 3–34 (CPFCSIQETKVIDSRLVADGHQVRRRRECTMC) is a zinc-finger region. Residues 49–139 (PRVVKRDGSR…VYRSFEDIRE (91 aa)) enclose the ATP-cone domain.

This sequence belongs to the NrdR family. Requires Zn(2+) as cofactor.

In terms of biological role, negatively regulates transcription of bacterial ribonucleotide reductase nrd genes and operons by binding to NrdR-boxes. This chain is Transcriptional repressor NrdR, found in Pseudoalteromonas atlantica (strain T6c / ATCC BAA-1087).